Reading from the N-terminus, the 158-residue chain is uncharacterized protein (158 aa).

Positions 1-18 (MDLASEITSATQTSSLCS) are enriched in polar residues. 3 disordered regions span residues 1–20 (MDLA…CSSG), 66–94 (LRDL…KPCL), and 111–158 (GSSG…GEEF). Residues 72-90 (RGSTSSSRSPSRPVSTSAS) show a composition bias toward low complexity. Polar residues-rich tracts occupy residues 111–120 (GSSGHLQSPG) and 149–158 (LSHSAQGEEF).

This is an uncharacterized protein from Homo sapiens (Human).